An 89-amino-acid chain; its full sequence is uncharacterized protein (89 aa).

3 consecutive transmembrane segments (helical) span residues 5–25 (AYLV…KRKA), 36–56 (RLWL…MQTF), and 67–87 (YGVP…YSPF).

The protein localises to the cell membrane. This is an uncharacterized protein from Bacillus subtilis (strain 168).